Here is a 162-residue protein sequence, read N- to C-terminus: Phosphopantetheine adenylyltransferase (162 aa).

Ser-11 provides a ligand contact to substrate. ATP is bound by residues 11–12 (SF) and His-19. The substrate site is built by Lys-43, Leu-75, and Arg-89. ATP contacts are provided by residues 90 to 92 (GLR), Glu-100, and 125 to 131 (FSYISSS).

It belongs to the bacterial CoaD family. In terms of assembly, homohexamer. Requires Mg(2+) as cofactor.

The protein localises to the cytoplasm. It carries out the reaction (R)-4'-phosphopantetheine + ATP + H(+) = 3'-dephospho-CoA + diphosphate. Its pathway is cofactor biosynthesis; coenzyme A biosynthesis; CoA from (R)-pantothenate: step 4/5. In terms of biological role, reversibly transfers an adenylyl group from ATP to 4'-phosphopantetheine, yielding dephospho-CoA (dPCoA) and pyrophosphate. The sequence is that of Phosphopantetheine adenylyltransferase from Petrotoga mobilis (strain DSM 10674 / SJ95).